We begin with the raw amino-acid sequence, 816 residues long: Coiled-coil and C2 domain-containing protein 1-like (816 aa).

Residues Met-1 to Lys-11 show a composition bias toward basic and acidic residues. 3 disordered regions span residues Met-1–Pro-135, Ala-157–Lys-176, and Ala-186–Asp-269. The segment covering Ile-25–Ala-47 has biased composition (acidic residues). Residues Asp-73 to Val-85 are compositionally biased toward basic and acidic residues. Positions Ser-86–Leu-100 are enriched in acidic residues. Residues Pro-122–Gln-131 show a composition bias toward low complexity. The DM14 1 stretch occupies residues Ile-145 to Val-200. A compositionally biased stretch (pro residues) spans Pro-220–Pro-243. DM14 stretches follow at residues Ser-265–Pro-317 and Leu-365–Pro-419. A coiled-coil region spans residues Leu-355–Glu-382. Residues Val-418–Asn-492 are disordered. Positions Pro-424–Val-433 are enriched in low complexity. The span at Ala-434 to Thr-449 shows a compositional bias: pro residues. Residues Ala-450–Lys-471 are compositionally biased toward low complexity. Residues Thr-483–Asn-492 show a composition bias toward polar residues. Positions Leu-502 to Pro-556 are DM14 4. Residues Arg-637–Tyr-776 enclose the C2 domain.

The protein belongs to the CC2D1 family. As to quaternary structure, interacts (via DM14 domains 1 and 3) with shrb; the interaction is direct and blocks access to the surface involved in shrb polymerization. This interaction may be required for the ESCRT-III complex role in multivesicular body formation.

It localises to the cytoplasm. The protein resides in the cytosol. The protein localises to the apicolateral cell membrane. It is found in the cell cortex. Its subcellular location is the endosome. In terms of biological role, phosphatidyl inositol monophosphate binding protein involved in endosomal protein sorting through regulation of the endosomal sorting required for transport (ESCRT) pathway. Required for full activity of the ESCRT-III complex core component shrb/shrub, probably by preventing its inappropriate polymerisation. Required, but not essential, for the efficient generation of intraluminal vesicles (ILVs) in multivesicular bodies (MVBs). Involved in a late stage of the endosomal pathway targeting transmembrane proteins of the plasma membrane for lysosomal degradation. Plays a critical role in regulation of multiple signal transduction pathways, including the Notch and BMP/decapentaplegic (dpp) signaling pathways, through targeting of membrane bound receptors to multivesicular bodies, isolating them from the cytoplasm and targeting them for lysosomal degradation. Involved in targeting N/Notch for endosomal degradation, negatively regulating the Notch signaling pathway. Regulates Notch signaling in imaginal disk cells and follicle cells during oogenesis and multiple developmental processes, including development of wings, veins, legs, eyes and bristles. Restricts the activity of Notch to the dorsoventral (D/V) boundary of the wing imaginal disk. In external sensory organ development regulates Notch signaling during asymmetric cell division and differentiation of sensory organ precursor cells. May be involved in regulation of apoptosis and cell growth independent of Notch signaling. Involved in targeting tkv for endosomal degradation, negatively regulating the BMP/decapentaplegic (dpp) signaling pathway. Regulates the BMP/dpp signaling pathway in follicle cells during oogenesis, but not in imaginal disk cells during wing development. May be involved in differentiation or morphogenesis of peripodial epithelial cells in the developing imaginal disk. Involved in abscission of germline cells during oogenesis. This chain is Coiled-coil and C2 domain-containing protein 1-like, found in Drosophila melanogaster (Fruit fly).